A 216-amino-acid chain; its full sequence is Guanylate kinase (216 aa).

In terms of domain architecture, Guanylate kinase-like spans Gly15–Arg193. Ala22–Ser29 is an ATP binding site.

It belongs to the guanylate kinase family.

Its subcellular location is the cytoplasm. It catalyses the reaction GMP + ATP = GDP + ADP. Essential for recycling GMP and indirectly, cGMP. This chain is Guanylate kinase, found in Cupriavidus pinatubonensis (strain JMP 134 / LMG 1197) (Cupriavidus necator (strain JMP 134)).